We begin with the raw amino-acid sequence, 255 residues long: Increased copper sensitivity protein 2 (255 aa).

Positions 1–12 (MGKFEQKERERI) are enriched in basic and acidic residues. 2 disordered regions span residues 1-32 (MGKF…KSLG) and 82-142 (PGDK…RKSH). Over residues 13-30 (STFSFPTTGSQSSTSIKS) the composition is skewed to polar residues. The segment covering 131–142 (SGRRKSYHRKSH) has biased composition (basic residues). Position 217 is a phosphoserine (S217).

This chain is Increased copper sensitivity protein 2 (ICS2), found in Saccharomyces cerevisiae (strain ATCC 204508 / S288c) (Baker's yeast).